The primary structure comprises 872 residues: Alanine--tRNA ligase (872 aa).

Residues His567, His571, Cys669, and His673 each coordinate Zn(2+).

The protein belongs to the class-II aminoacyl-tRNA synthetase family. Zn(2+) is required as a cofactor.

It is found in the cytoplasm. The catalysed reaction is tRNA(Ala) + L-alanine + ATP = L-alanyl-tRNA(Ala) + AMP + diphosphate. Its function is as follows. Catalyzes the attachment of alanine to tRNA(Ala) in a two-step reaction: alanine is first activated by ATP to form Ala-AMP and then transferred to the acceptor end of tRNA(Ala). Also edits incorrectly charged Ser-tRNA(Ala) and Gly-tRNA(Ala) via its editing domain. The sequence is that of Alanine--tRNA ligase from Streptococcus mutans serotype c (strain ATCC 700610 / UA159).